Here is a 405-residue protein sequence, read N- to C-terminus: Imidazolonepropionase (405 aa).

Fe(3+) contacts are provided by His73 and His75. Zn(2+) contacts are provided by His73 and His75. The 4-imidazolone-5-propanoate site is built by Arg82, Tyr145, and His178. Tyr145 contacts N-formimidoyl-L-glutamate. His243 contacts Fe(3+). His243 serves as a coordination point for Zn(2+). Residue Gln246 coordinates 4-imidazolone-5-propanoate. Position 318 (Asp318) interacts with Fe(3+). Asp318 is a binding site for Zn(2+). Residues Asn320 and Gly322 each coordinate N-formimidoyl-L-glutamate. Residue Thr323 participates in 4-imidazolone-5-propanoate binding.

The protein belongs to the metallo-dependent hydrolases superfamily. HutI family. Zn(2+) is required as a cofactor. The cofactor is Fe(3+).

The protein resides in the cytoplasm. The catalysed reaction is 4-imidazolone-5-propanoate + H2O = N-formimidoyl-L-glutamate. The protein operates within amino-acid degradation; L-histidine degradation into L-glutamate; N-formimidoyl-L-glutamate from L-histidine: step 3/3. Its function is as follows. Catalyzes the hydrolytic cleavage of the carbon-nitrogen bond in imidazolone-5-propanoate to yield N-formimidoyl-L-glutamate. It is the third step in the universal histidine degradation pathway. The chain is Imidazolonepropionase from Brucella suis (strain ATCC 23445 / NCTC 10510).